Reading from the N-terminus, the 71-residue chain is General transcription factor IIH subunit 5 (71 aa).

Thr69 carries the post-translational modification Phosphothreonine.

This sequence belongs to the TFB5 family. As to quaternary structure, component of the 7-subunit TFIIH core complex composed of XPB/ERCC3, XPD/ERCC2, GTF2H1, GTF2H2, GTF2H3, GTF2H4 and GTF2H5, which is active in NER. The core complex associates with the 3-subunit CDK-activating kinase (CAK) module composed of CCNH/cyclin H, CDK7 and MNAT1 to form the 10-subunit holoenzyme (holo-TFIIH) active in transcription. Part of TBP-based Pol II pre-initiation complex (PIC), in which Pol II core assembles with general transcription factors and other specific initiation factors including GTF2E1, GTF2E2, GTF2F1, GTF2F2, TCEA1, ERCC2, ERCC3, GTF2H2, GTF2H3, GTF2H4, GTF2H5, GTF2A1, GTF2A2, GTF2B and TBP; this large multi-subunit PIC complex mediates DNA unwinding and targets Pol II core to the transcription start site where the first phosphodiester bond forms.

The protein localises to the nucleus. The protein resides in the cytoplasm. In terms of biological role, component of the general transcription and DNA repair factor IIH (TFIIH) core complex, which is involved in general and transcription-coupled nucleotide excision repair (NER) of damaged DNA and, when complexed to CAK, in RNA transcription by RNA polymerase II. In NER, TFIIH acts by opening DNA around the lesion to allow the excision of the damaged oligonucleotide and its replacement by a new DNA fragment. In transcription, TFIIH has an essential role in transcription initiation. When the pre-initiation complex (PIC) has been established, TFIIH is required for promoter opening and promoter escape. Phosphorylation of the C-terminal tail (CTD) of the largest subunit of RNA polymerase II by the kinase module CAK controls the initiation of transcription. Necessary for the stability of the TFIIH complex and for the presence of normal levels of TFIIH in the cell. This chain is General transcription factor IIH subunit 5, found in Mus musculus (Mouse).